Here is a 260-residue protein sequence, read N- to C-terminus: Purine nucleoside phosphorylase PD_1754 (260 aa).

The Zn(2+) site is built by His-79, Cys-120, and His-137.

Belongs to the purine nucleoside phosphorylase YfiH/LACC1 family. Homodimer. The cofactor is Cu(2+). Zn(2+) is required as a cofactor.

The enzyme catalyses adenosine + phosphate = alpha-D-ribose 1-phosphate + adenine. The catalysed reaction is S-methyl-5'-thioadenosine + phosphate = 5-(methylsulfanyl)-alpha-D-ribose 1-phosphate + adenine. It catalyses the reaction inosine + phosphate = alpha-D-ribose 1-phosphate + hypoxanthine. It carries out the reaction adenosine + H2O + H(+) = inosine + NH4(+). Functionally, purine nucleoside enzyme that catalyzes the phosphorolysis of adenosine and inosine nucleosides, yielding D-ribose 1-phosphate and the respective free bases, adenine and hypoxanthine. Also catalyzes the phosphorolysis of S-methyl-5'-thioadenosine into adenine and S-methyl-5-thio-alpha-D-ribose 1-phosphate. Also has adenosine deaminase activity. The chain is Purine nucleoside phosphorylase PD_1754 from Xylella fastidiosa (strain Temecula1 / ATCC 700964).